The chain runs to 248 residues: Small ribosomal subunit protein uS2c (248 aa).

It belongs to the universal ribosomal protein uS2 family.

It is found in the plastid. The protein resides in the chloroplast. This chain is Small ribosomal subunit protein uS2c (rps2), found in Trachelium caeruleum (Blue throatwort).